The sequence spans 246 residues: Probable transcriptional regulatory protein ASA_2843 (246 aa).

The protein belongs to the TACO1 family.

The protein localises to the cytoplasm. The protein is Probable transcriptional regulatory protein ASA_2843 of Aeromonas salmonicida (strain A449).